A 138-amino-acid polypeptide reads, in one-letter code: Endoribonuclease YbeY (138 aa).

3 residues coordinate Zn(2+): histidine 105, histidine 109, and aspartate 115.

It belongs to the endoribonuclease YbeY family. It depends on Zn(2+) as a cofactor.

Its subcellular location is the cytoplasm. Functionally, single strand-specific metallo-endoribonuclease involved in late-stage 70S ribosome quality control and in maturation of the 3' terminus of the 16S rRNA. This chain is Endoribonuclease YbeY, found in Chlorobium phaeobacteroides (strain BS1).